The primary structure comprises 386 residues: Succinate--CoA ligase [ADP-forming] subunit beta (386 aa).

The 236-residue stretch at 9 to 244 folds into the ATP-grasp domain; sequence KEILHKFNVP…YDEEVKEEIE (236 aa). Residues K46, 53-55, E99, S102, and E107 each bind ATP; that span reads GRG. N199 and D213 together coordinate Mg(2+). Substrate-binding positions include N264 and 321–323; that span reads GIM.

The protein belongs to the succinate/malate CoA ligase beta subunit family. In terms of assembly, heterotetramer of two alpha and two beta subunits. The cofactor is Mg(2+).

It catalyses the reaction succinate + ATP + CoA = succinyl-CoA + ADP + phosphate. It carries out the reaction GTP + succinate + CoA = succinyl-CoA + GDP + phosphate. The protein operates within carbohydrate metabolism; tricarboxylic acid cycle; succinate from succinyl-CoA (ligase route): step 1/1. Succinyl-CoA synthetase functions in the citric acid cycle (TCA), coupling the hydrolysis of succinyl-CoA to the synthesis of either ATP or GTP and thus represents the only step of substrate-level phosphorylation in the TCA. The beta subunit provides nucleotide specificity of the enzyme and binds the substrate succinate, while the binding sites for coenzyme A and phosphate are found in the alpha subunit. This Wolbachia pipientis subsp. Culex pipiens (strain wPip) protein is Succinate--CoA ligase [ADP-forming] subunit beta.